We begin with the raw amino-acid sequence, 103 residues long: Muscarinic toxin BM14 (103 aa).

The N-terminal stretch at 1 to 21 (MKTLLLTLVVVTIICLDLGYT) is a signal peptide. Disulfide bonds link cysteine 24–cysteine 45, cysteine 27–cysteine 37, cysteine 38–cysteine 72, cysteine 76–cysteine 90, and cysteine 91–cysteine 96.

The protein belongs to the three-finger toxin family. Ancestral subfamily. Orphan group XVII sub-subfamily. As to expression, expressed by the venom gland.

Its subcellular location is the secreted. This toxin inhibits the binding of [3H]quinuclidinyl benzilate to the M2 muscarinic acetylcholine (mAchR) receptor subtype (CHRM2). In Bungarus multicinctus (Many-banded krait), this protein is Muscarinic toxin BM14.